Reading from the N-terminus, the 203-residue chain is MKLRWFAFLIVLLAGCSSKHDYTNPPWNAKVPVQRAMQWMPISQKAGAAWGVDPQLITAIIAIESGGNPNAVSKSNAIGLMQIKASTSGRDVYRRMGWSGEPTTSELKNPERNISMGAAYLNILETGPLAGIEDPKVLQYALVVSYANGAGALLRTFSSDRKKAISKINDLDADEFLDHVARNHPAPQAPRYIYKLEQALDAM.

The N-terminal stretch at 1 to 15 is a signal peptide; that stretch reads MKLRWFAFLIVLLAG. C16 is lipidated: N-palmitoyl cysteine. Residue C16 is the site of S-diacylglycerol cysteine attachment.

It belongs to the transglycosylase Slt family.

The protein localises to the cell outer membrane. It carries out the reaction Endolytic cleavage of the (1-&gt;4)-beta-glycosidic linkage between N-acetylmuramic acid (MurNAc) and N-acetylglucosamine (GlcNAc) residues in peptidoglycan with concomitant formation of a 1,6-anhydrobond in the MurNAc residue.. Murein-degrading enzyme. May play a role in recycling of muropeptides during cell elongation and/or cell division. Preferentially cleaves at a distance of more than two disaccharide units from the ends of the glycan chain. This chain is Endo-type membrane-bound lytic murein transglycosylase A, found in Escherichia coli O1:K1 / APEC.